Reading from the N-terminus, the 114-residue chain is Large ribosomal subunit protein bL17 (114 aa).

This sequence belongs to the bacterial ribosomal protein bL17 family. Part of the 50S ribosomal subunit. Contacts protein L32.

The chain is Large ribosomal subunit protein bL17 from Halothermothrix orenii (strain H 168 / OCM 544 / DSM 9562).